The chain runs to 128 residues: Sirohydrochlorin cobaltochelatase (128 aa).

H9 acts as the Proton acceptor in catalysis. H9 lines the Co(2+) pocket. Substrate is bound by residues K43 and 68-73; that span reads FATGTH. H73 contacts Co(2+).

This sequence belongs to the CbiX family. CbiXS subfamily. In terms of assembly, homotetramer; dimer of dimers.

The catalysed reaction is Co-sirohydrochlorin + 2 H(+) = sirohydrochlorin + Co(2+). The protein operates within cofactor biosynthesis; adenosylcobalamin biosynthesis; cob(II)yrinate a,c-diamide from sirohydrochlorin (anaerobic route): step 1/10. Its function is as follows. Catalyzes the insertion of Co(2+) into sirohydrochlorin as part of the anaerobic pathway to cobalamin biosynthesis. This Saccharolobus solfataricus (strain ATCC 35092 / DSM 1617 / JCM 11322 / P2) (Sulfolobus solfataricus) protein is Sirohydrochlorin cobaltochelatase.